The chain runs to 167 residues: Translationally-controlled tumor protein homolog (167 aa).

Residues 1 to 167 (MIIYTDIISG…WKHGVKAEKI (167 aa)) enclose the TCTP domain.

The protein belongs to the TCTP family.

It localises to the cytoplasm. It is found in the cytoskeleton. Its function is as follows. Involved in protein synthesis. Involved in microtubule stabilization. This is Translationally-controlled tumor protein homolog from Kluyveromyces lactis (strain ATCC 8585 / CBS 2359 / DSM 70799 / NBRC 1267 / NRRL Y-1140 / WM37) (Yeast).